A 127-amino-acid chain; its full sequence is Photosystem II reaction center Psb28 protein (127 aa).

The tract at residues 108–127 is disordered; the sequence is LGYSQSQDSDQTEGADNQQA. The span at 109–127 shows a compositional bias: polar residues; that stretch reads GYSQSQDSDQTEGADNQQA.

Belongs to the Psb28 family. As to quaternary structure, part of the photosystem II complex.

The protein resides in the cellular thylakoid membrane. This chain is Photosystem II reaction center Psb28 protein, found in Synechococcus sp. (strain CC9605).